Reading from the N-terminus, the 172-residue chain is Large ribosomal subunit protein uL10 (172 aa).

Belongs to the universal ribosomal protein uL10 family. In terms of assembly, part of the ribosomal stalk of the 50S ribosomal subunit. The N-terminus interacts with L11 and the large rRNA to form the base of the stalk. The C-terminus forms an elongated spine to which L12 dimers bind in a sequential fashion forming a multimeric L10(L12)X complex.

Functionally, forms part of the ribosomal stalk, playing a central role in the interaction of the ribosome with GTP-bound translation factors. The sequence is that of Large ribosomal subunit protein uL10 from Rhodopseudomonas palustris (strain BisA53).